Reading from the N-terminus, the 365-residue chain is Ribosomal RNA large subunit methyltransferase F (365 aa).

Positions 1–50 (MSKPAVKSVPSATAKTATRAVNIRQKVKAPKQAKPEAKGRAKPSKDKPRA) are disordered. The span at 33–50 (AKPEAKGRAKPSKDKPRA) shows a compositional bias: basic and acidic residues.

This sequence belongs to the methyltransferase superfamily. METTL16/RlmF family.

The protein localises to the cytoplasm. It carries out the reaction adenosine(1618) in 23S rRNA + S-adenosyl-L-methionine = N(6)-methyladenosine(1618) in 23S rRNA + S-adenosyl-L-homocysteine + H(+). Its function is as follows. Specifically methylates the adenine in position 1618 of 23S rRNA. This is Ribosomal RNA large subunit methyltransferase F from Shewanella baltica (strain OS155 / ATCC BAA-1091).